We begin with the raw amino-acid sequence, 187 residues long: Threonylcarbamoyl-AMP synthase (187 aa).

The region spanning 4–187 (TLTLSEAVTA…DARSGHILRL (184 aa)) is the YrdC-like domain.

The protein belongs to the SUA5 family. TsaC subfamily.

The protein resides in the cytoplasm. It catalyses the reaction L-threonine + hydrogencarbonate + ATP = L-threonylcarbamoyladenylate + diphosphate + H2O. In terms of biological role, required for the formation of a threonylcarbamoyl group on adenosine at position 37 (t(6)A37) in tRNAs that read codons beginning with adenine. Catalyzes the conversion of L-threonine, HCO(3)(-)/CO(2) and ATP to give threonylcarbamoyl-AMP (TC-AMP) as the acyladenylate intermediate, with the release of diphosphate. This chain is Threonylcarbamoyl-AMP synthase, found in Xylella fastidiosa (strain M23).